The primary structure comprises 902 residues: Auxin response factor 5 (902 aa).

The segment at residues Phe158–Asn260 is a DNA-binding region (TF-B3). The tract at residues Ser497–Gly543 is disordered. One can recognise a PB1 domain in the interval Arg793–Glu877.

The protein belongs to the ARF family. In terms of assembly, homodimers and heterodimers. Interacts with BRX and the auxin-responsive proteins IAA1, IAA12 (BODENLOS), IAA17 and ARF7. As to expression, expressed in the whole plant with a lower expression in leaves. Detected in embryo axis, provascular tissues, procambium and some differentiated vascular regions of mature organs.

It localises to the nucleus. In terms of biological role, auxin response factors (ARFs) are transcriptional factors that bind specifically to the DNA sequence 5'-TGTCTC-3' found in the auxin-responsive promoter elements (AuxREs). Seems to act as transcriptional activator. Formation of heterodimers with Aux/IAA proteins may alter their ability to modulate early auxin response genes expression. Mediates embryo axis formation and vascular tissues differentiation. Functionally redundant with ARF7. May be necessary to counteract AMP1 activity. This Arabidopsis thaliana (Mouse-ear cress) protein is Auxin response factor 5 (ARF5).